The sequence spans 391 residues: Nucleosome assembly protein 1-like 1 (391 aa).

Over residues Met1–Ser10 the composition is skewed to basic and acidic residues. Residues Met1–Lys32 are disordered. Ala2 carries the N-acetylalanine modification. Ser10 carries the post-translational modification Phosphoserine. The segment covering Glu11–Gly28 has biased composition (acidic residues). A phosphothreonine mark is found at Thr62 and Thr64. Position 69 is a phosphoserine (Ser69). Lys116 is subject to N6-acetyllysine. Positions Tyr125 to Ala150 match the NAP1L motif motif. The span at Glu131 to Ser143 shows a compositional bias: acidic residues. A disordered region spans residues Glu131 to Asp163. Ser143 is subject to Phosphoserine. Positions Glu144–Asp163 are enriched in basic and acidic residues. The Nuclear localization signal signature appears at Ile273–His279. Positions Ala346–Asp376 are enriched in acidic residues. The tract at residues Ala346–Gln391 is disordered. Residues Glu359 and Glu360 each carry the 5-glutamyl polyglycine modification. Residues Tyr377 to Gln391 are compositionally biased toward basic and acidic residues. Residue Cys388 is modified to Cysteine methyl ester. The S-farnesyl cysteine moiety is linked to residue Cys388. Positions Lys389–Gln391 are cleaved as a propeptide — removed in mature form.

The protein belongs to the nucleosome assembly protein (NAP) family. As to quaternary structure, homodimer. The dimer binds strongly and sequentially to single and double H2A-H2B heterodimers. Interacts with ERCC6; this interaction increases ERCC6 processivity. Interacts with RAD54. Interacts with SETD1A. Post-translationally, polyglycylated by TTLL10 on glutamate residues, resulting in polyglycine chains on the gamma-carboxyl group. Both polyglutamylation and polyglycylation modifications can coexist on the same protein on adjacent residues, and lowering polyglycylation levels increases polyglutamylation, and reciprocally. Polyglutamylated by TTLL4 on glutamate residues, resulting in polyglutamate chains on the gamma-carboxyl group. Both polyglutamylation and polyglycylation modifications can coexist on the same protein on adjacent residues, and lowering polyglycylation levels increases polyglutamylation, and reciprocally. As to expression, highly expressed in the brain (at protein level). High expression in cerebral cortex, not in cerebellar cortex.

The protein localises to the nucleus. It localises to the cytoplasm. It is found in the melanosome. Histone chaperone that plays a role in the nuclear import of H2A-H2B and nucleosome assembly. Also participates in several important DNA repair mechanisms: greatly enhances ERCC6-mediated chromatin remodeling which is essential for transcription-coupled nucleotide excision DNA repair. Also stimulates homologous recombination (HR) by RAD51 and RAD54 which is essential in mitotic DNA double strand break (DSB) repair. Plays a key role in the regulation of embryonic neurogenesis. Promotes the proliferation of neural progenitors and inhibits neuronal differentiation during cortical development. Regulates neurogenesis via the modulation of RASSF10; regulates RASSF10 expression by promoting SETD1A-mediated H3K4 methylation at the RASSF10 promoter. This is Nucleosome assembly protein 1-like 1 (Nap1l1) from Mus musculus (Mouse).